We begin with the raw amino-acid sequence, 357 residues long: Biotin synthase (357 aa).

Residues 1 to 27 (MTTAETKPATETGENAGTTGTAGTAAT) are disordered. Low complexity predominate over residues 9–27 (ATETGENAGTTGTAGTAAT). Positions 78–303 (DAVEMEGIIS…RQLLRFAGGR (226 aa)) constitute a Radical SAM core domain. Cys-93, Cys-97, and Cys-100 together coordinate [4Fe-4S] cluster. Positions 136, 228, and 298 each coordinate [2Fe-2S] cluster.

It belongs to the radical SAM superfamily. Biotin synthase family. In terms of assembly, homodimer. The cofactor is [4Fe-4S] cluster. It depends on [2Fe-2S] cluster as a cofactor.

The enzyme catalyses (4R,5S)-dethiobiotin + (sulfur carrier)-SH + 2 reduced [2Fe-2S]-[ferredoxin] + 2 S-adenosyl-L-methionine = (sulfur carrier)-H + biotin + 2 5'-deoxyadenosine + 2 L-methionine + 2 oxidized [2Fe-2S]-[ferredoxin]. It participates in cofactor biosynthesis; biotin biosynthesis; biotin from 7,8-diaminononanoate: step 2/2. In terms of biological role, catalyzes the conversion of dethiobiotin (DTB) to biotin by the insertion of a sulfur atom into dethiobiotin via a radical-based mechanism. This Corynebacterium jeikeium (strain K411) protein is Biotin synthase.